A 422-amino-acid chain; its full sequence is Serine hydroxymethyltransferase (422 aa).

(6S)-5,6,7,8-tetrahydrofolate contacts are provided by residues leucine 120 and 124 to 126 (GHL). Lysine 228 is subject to N6-(pyridoxal phosphate)lysine.

This sequence belongs to the SHMT family. As to quaternary structure, homodimer. The cofactor is pyridoxal 5'-phosphate.

The protein localises to the cytoplasm. It carries out the reaction (6R)-5,10-methylene-5,6,7,8-tetrahydrofolate + glycine + H2O = (6S)-5,6,7,8-tetrahydrofolate + L-serine. It participates in one-carbon metabolism; tetrahydrofolate interconversion. It functions in the pathway amino-acid biosynthesis; glycine biosynthesis; glycine from L-serine: step 1/1. In terms of biological role, catalyzes the reversible interconversion of serine and glycine with tetrahydrofolate (THF) serving as the one-carbon carrier. This reaction serves as the major source of one-carbon groups required for the biosynthesis of purines, thymidylate, methionine, and other important biomolecules. Also exhibits THF-independent aldolase activity toward beta-hydroxyamino acids, producing glycine and aldehydes, via a retro-aldol mechanism. In Actinobacillus succinogenes (strain ATCC 55618 / DSM 22257 / CCUG 43843 / 130Z), this protein is Serine hydroxymethyltransferase.